A 518-amino-acid polypeptide reads, in one-letter code: Probable Xaa-Pro aminopeptidase HCDG_07916 (518 aa).

Mn(2+)-binding residues include Asp-289, Asp-300, Glu-437, and Glu-475.

It belongs to the peptidase M24B family. Mn(2+) is required as a cofactor.

It carries out the reaction Release of any N-terminal amino acid, including proline, that is linked to proline, even from a dipeptide or tripeptide.. Functionally, catalyzes the removal of a penultimate prolyl residue from the N-termini of peptides. In Ajellomyces capsulatus (strain H143) (Darling's disease fungus), this protein is Probable Xaa-Pro aminopeptidase HCDG_07916.